Reading from the N-terminus, the 343-residue chain is Putative ALA-interacting subunit 2 (343 aa).

A helical membrane pass occupies residues 43-63; sequence PISVITVFMLMGFVFIPIGLI. N-linked (GlcNAc...) asparagine glycans are attached at residues Asn103, Asn178, Asn191, and Asn218. A helical transmembrane segment spans residues 301-321; that stretch reads FLGITYLVVGSSSIVISIIFM.

It belongs to the CDC50/LEM3 family. In terms of tissue distribution, expressed in roots, leaves, stems, flowers and siliques.

It localises to the membrane. In Arabidopsis thaliana (Mouse-ear cress), this protein is Putative ALA-interacting subunit 2 (ALIS2).